Reading from the N-terminus, the 206-residue chain is Large ribosomal subunit protein uL4 (206 aa).

The segment at 45–76 (RQGTQSAKTRTEVSGGGIKPWRQKGTGRARQG) is disordered.

The protein belongs to the universal ribosomal protein uL4 family. Part of the 50S ribosomal subunit.

One of the primary rRNA binding proteins, this protein initially binds near the 5'-end of the 23S rRNA. It is important during the early stages of 50S assembly. It makes multiple contacts with different domains of the 23S rRNA in the assembled 50S subunit and ribosome. Its function is as follows. Forms part of the polypeptide exit tunnel. The chain is Large ribosomal subunit protein uL4 from Clostridium acetobutylicum (strain ATCC 824 / DSM 792 / JCM 1419 / IAM 19013 / LMG 5710 / NBRC 13948 / NRRL B-527 / VKM B-1787 / 2291 / W).